The primary structure comprises 1322 residues: MGVEDYHVIELVGEGSFGRVYKGRRKYTGQTVAMKFIMKQGKTDKDIHSLRQEIEILRKLKHENIIEMLDSFENAREFCVVTEFAQGELFEILEDDKCLPEEQVQAIAKQLVKALDYLHSNRIIHRDMKPQNILIGAGSVVKLCDFGFARAMSTNTVVLRSIKGTPLYMAPELVKEQPYDRTVDLWSLGVILYELYVGQPPFYTNSVYALIRHIVKDPVKYPDEMSTYFESFLKGLLNKEPHSRLTWPALREHPFVKETQEEVEAREIHTAVVDNKAAWMLKGNGGQQRNEKCDSVTLVEDMSATKGLADVQSDMKSAVKVNSPPTEDFVGFPTQEEIKSSGNPTLDKLENTSRTVKGAQVIGENDKALDLVLLSLERFSKSPDSKRDKDVACSVQSLRIISNLVATRAIVSVGLIEKITCALLDFTDALVGMKSPEFNNIIPKSLSVTKNLVGHVEGNNIHSSYIRHWTKVVEIFIQVVRWEEEGTGRIIYEACSCITTMLSRVAQDLKSSTPDSVSKQILEHANMSRIVDHLCLCLASSGSSLTSGSSQMLAAACEACRAIWILIDTSETFFKNDDVNILPLDALQNRLSQHDIGNSEWGPLSEKLVDTVTRAYLRSKHVQVAVGHCLHQRVEAPLVSAIQLLSRCCLHNGILPSMLCGLPSSLPITTVVSGGEDGTVISEIFSILSYATLSSKDQQTGEKDNFEGRLNNLVFHSCLMLATVAQCLKLTGRNSVLLMLTTSPKKHQHRLSAIANHIASDDKIEASLQNHSASAMLALASILALEKGSSAGSSVSELVVSLIPRATKLCYHLRPMPSNEGEVISHSANYAKWHGLLDGCIGLLESRLKWGGPLAVQQLIASGTPLLLINLLAGKLSNASPEDIKKTSNRIGLSPIGVVWTISSICHCLSGGTTFRQVLVKIETMKLITCLLSDAHIKLVKSWGGPGGGKDGVRETINVIIDLLAFPFVALQSQPGSLSATASVNSGFILNIGSPGVRVCMEDRDLLKAIEEDMDKYIIVLLEVGVPSLILRCLDHLELKDLVRPVAFLAKMVGRPRLAVDLVSKGLLDPNRMKKLLNQSSPREVILDILMIISDLSRMDKAFYKYIGEASVLQPLKEYLTHVDPNIRAKACSALGNMCRHNGYFYSALAEHQIIGLLIDRCADPDKRTQKFACFAIGNAAYHNDTLYEELRRSITQLANVLTTAEEDKTKANAAGALSNLVRNSNKLCEDIVSKGALQTLLRLVADCSTLALNPSKKETASESPLKIALFSLAKMCSNHQICRQFVKSSELFPVIARLKQSPEANIAHYASVIVAKVSGES.

In terms of domain architecture, Protein kinase spans 6 to 256 (YHVIELVGEG…WPALREHPFV (251 aa)). ATP contacts are provided by residues 12–20 (VGEGSFGRV) and K35. Residue D127 is the Proton acceptor of the active site. The tract at residues 1000–1322 (CMEDRDLLKA…VIVAKVSGES (323 aa)) is required for the binding to Kinesin-12 members. ARM repeat units follow at residues 1056–1098 (PRLA…DLSR), 1101–1140 (KAFY…NMCR), 1143–1182 (GYFY…NAAY), 1183–1223 (HNDT…NLVR), 1226–1273 (NKLC…LFSL), and 1281–1320 (QICR…KVSG).

Belongs to the protein kinase superfamily. Ser/Thr protein kinase family. As to quaternary structure, interacts with Kinesin-12 members KIN12A/PAKRP1 and KIN12B/PAKRP1L. Interacts with KIN7B/NACK2. Ubiquitous.

The protein localises to the cytoplasm. Its subcellular location is the cytoskeleton. It is found in the phragmoplast. It catalyses the reaction L-seryl-[protein] + ATP = O-phospho-L-seryl-[protein] + ADP + H(+). It carries out the reaction L-threonyl-[protein] + ATP = O-phospho-L-threonyl-[protein] + ADP + H(+). Functionally, plays a role in conventional modes of cytokinesis in meristems and during male gametogenesis but also acts in nonconventional modes of cytokinesis (cellularization) during female gametogenesis. Constitutes a signaling module in association with Kinesin-12 members that is required to support phragmoplast expansion and cell-plate growth in plant cells. In Arabidopsis thaliana (Mouse-ear cress), this protein is Serine/threonine-protein kinase TIO (TIO).